The chain runs to 207 residues: High frequency lysogenization protein HflD homolog (207 aa).

Belongs to the HflD family.

Its subcellular location is the cytoplasm. The protein resides in the cell inner membrane. This chain is High frequency lysogenization protein HflD homolog, found in Pseudomonas fluorescens (strain ATCC BAA-477 / NRRL B-23932 / Pf-5).